We begin with the raw amino-acid sequence, 476 residues long: Adenosylhomocysteinase (476 aa).

Substrate-binding residues include Thr67, Asp142, and Glu202. 203-205 (TTT) is a binding site for NAD(+). Substrate contacts are provided by Lys232 and Asp236. Residues Asn237, 266–271 (GYGDVG), Glu289, Asn324, 345–347 (IGH), and Asn390 contribute to the NAD(+) site.

Belongs to the adenosylhomocysteinase family. NAD(+) serves as cofactor.

It is found in the cytoplasm. It carries out the reaction S-adenosyl-L-homocysteine + H2O = L-homocysteine + adenosine. It functions in the pathway amino-acid biosynthesis; L-homocysteine biosynthesis; L-homocysteine from S-adenosyl-L-homocysteine: step 1/1. In terms of biological role, may play a key role in the regulation of the intracellular concentration of adenosylhomocysteine. The polypeptide is Adenosylhomocysteinase (Prochlorococcus marinus (strain MIT 9303)).